We begin with the raw amino-acid sequence, 377 residues long: tRNA/tmRNA (uracil-C(5))-methyltransferase (377 aa).

S-adenosyl-L-methionine contacts are provided by Q199, Y227, N232, E248, and D308. The active-site Nucleophile is the C333. Residue E367 is the Proton acceptor of the active site.

Belongs to the class I-like SAM-binding methyltransferase superfamily. RNA M5U methyltransferase family. TrmA subfamily.

It carries out the reaction uridine(54) in tRNA + S-adenosyl-L-methionine = 5-methyluridine(54) in tRNA + S-adenosyl-L-homocysteine + H(+). The enzyme catalyses uridine(341) in tmRNA + S-adenosyl-L-methionine = 5-methyluridine(341) in tmRNA + S-adenosyl-L-homocysteine + H(+). Functionally, dual-specificity methyltransferase that catalyzes the formation of 5-methyluridine at position 54 (m5U54) in all tRNAs, and that of position 341 (m5U341) in tmRNA (transfer-mRNA). The chain is tRNA/tmRNA (uracil-C(5))-methyltransferase from Aeromonas salmonicida (strain A449).